The primary structure comprises 158 residues: UPF0098 protein YbhB (158 aa).

It belongs to the UPF0098 family. As to quaternary structure, homodimer.

The protein resides in the cytoplasm. The polypeptide is UPF0098 protein YbhB (ybhB) (Escherichia coli (strain K12)).